The chain runs to 192 residues: Adenylate kinase (192 aa).

12-17 contacts ATP; that stretch reads GSGKTT. The NMP stretch occupies residues 34–63; it reads STGDLLRAQVASGSELGKTIDSFISKGNLV. Residues Thr-35, Arg-40, 61–63, 88–91, and Gln-95 contribute to the AMP site; these read NLV and GYPR. The segment at 130-136 is LID; sequence GRNRGAD. Residue Arg-131 participates in ATP binding. AMP is bound by residues Arg-133 and Arg-145. Arg-173 is a binding site for ATP.

This sequence belongs to the adenylate kinase family. As to quaternary structure, monomer.

It is found in the cytoplasm. It catalyses the reaction AMP + ATP = 2 ADP. It functions in the pathway purine metabolism; AMP biosynthesis via salvage pathway; AMP from ADP: step 1/1. In terms of biological role, catalyzes the reversible transfer of the terminal phosphate group between ATP and AMP. Plays an important role in cellular energy homeostasis and in adenine nucleotide metabolism. The sequence is that of Adenylate kinase from Campylobacter jejuni subsp. doylei (strain ATCC BAA-1458 / RM4099 / 269.97).